Here is a 257-residue protein sequence, read N- to C-terminus: Glycerol-3-phosphate acyltransferase (257 aa).

Helical transmembrane passes span Ile7–Ser27, Ile66–Ile86, Ala104–Phe124, Ile140–Ile160, Met164–Ile184, and Tyr203–Ile223.

This sequence belongs to the PlsY family. As to quaternary structure, probably interacts with PlsX.

It is found in the cell membrane. It carries out the reaction an acyl phosphate + sn-glycerol 3-phosphate = a 1-acyl-sn-glycero-3-phosphate + phosphate. The protein operates within lipid metabolism; phospholipid metabolism. Functionally, catalyzes the transfer of an acyl group from acyl-phosphate (acyl-PO(4)) to glycerol-3-phosphate (G3P) to form lysophosphatidic acid (LPA). This enzyme utilizes acyl-phosphate as fatty acyl donor, but not acyl-CoA or acyl-ACP. The polypeptide is Glycerol-3-phosphate acyltransferase (Ureaplasma parvum serovar 3 (strain ATCC 700970)).